A 292-amino-acid chain; its full sequence is Tumor necrosis factor alpha-induced protein 8-like protein 3 (292 aa).

The tract at residues 81–107 (DAQPAARSMDSDSGEQSEGEPVTAAGP) is disordered. The tract at residues 109 to 292 (VFSSKSLALQ…INKLLDEKVL (184 aa)) is binding to phosphoinositides.

It belongs to the TNFAIP8 family. As to expression, widely expressed (at protein level). Highly expressed in most carcinoma cell lines.

The protein localises to the cytoplasm. It localises to the cell membrane. In terms of biological role, acts as a lipid transfer protein. Preferentially captures and shuttles two lipid second messengers, i.e., phosphatidylinositol 4,5- bisphosphate and phosphatidylinositol 3,4,5-trisphosphate and increases their levels in the plasma membrane. Additionally, may also function as a lipid-presenting protein to enhance the activity of the PI3K-AKT and MEK-ERK pathways. May act as a regulator of tumorigenesis through its activation of phospholipid signaling. The polypeptide is Tumor necrosis factor alpha-induced protein 8-like protein 3 (TNFAIP8L3) (Homo sapiens (Human)).